Here is a 238-residue protein sequence, read N- to C-terminus: Mannose-binding protein A (238 aa).

The N-terminal stretch at methionine 1–serine 17 is a signal peptide. Positions aspartate 38–glutamate 49 are enriched in basic and acidic residues. Residues aspartate 38–aspartate 87 form a disordered region. One can recognise a Collagen-like domain in the interval glycine 39–serine 88. A 4-hydroxyproline modification is found at proline 43. Residues lysine 44 and lysine 47 each carry the 5-hydroxylysine modification. Lysine 44 and lysine 47 each carry an O-linked (Gal...) hydroxylysine glycan. A 4-hydroxyproline mark is found at proline 50, proline 61, proline 67, proline 73, and proline 78. 5-hydroxylysine occurs at positions 79 and 82. 2 O-linked (Gal...) hydroxylysine glycosylation sites follow: lysine 79 and lysine 82. One can recognise a C-type lectin domain in the interval alanine 143–alanine 238. 2 disulfide bridges follow: cysteine 145–cysteine 234 and cysteine 212–cysteine 226. 9 residues coordinate Ca(2+): aspartate 178, glutamate 182, glutamate 202, asparagine 204, aspartate 205, glutamate 210, aspartate 211, asparagine 222, and aspartate 223. The interval glutamate 202–glutamate 210 is calcium-dependent carbohydrate binding.

In terms of assembly, homotrimer. Forms higher oligomeric complexes formed by the association of two, three or more homotrimers. Oligomerization occurs in the endoplasmic reticulum. Interacts with MASP1 and MASP2. In terms of processing, hydroxylated on lysine and proline residues within the collagen-like domain. O-glycosylated. O-linked glycans on hydroxylysine residues consist of Glc-Gal disaccharides bound to the oxygen atom of post-translationally added hydroxyl groups. Detected in blood serum (at protein level).

Its subcellular location is the secreted. Functionally, calcium-dependent lectin. Plays a role in the innate immune response by binding mannose, fucose and N-acetylglucosamine moieties on different microorganisms and mediating activation of the lectin complement pathway. Binds to late apoptotic cells, as well as to apoptotic blebs and to necrotic cells, but not to early apoptotic cells, facilitating their uptake by macrophages. The sequence is that of Mannose-binding protein A (Mbl1) from Rattus norvegicus (Rat).